The chain runs to 151 residues: SsrA-binding protein (151 aa).

This sequence belongs to the SmpB family.

The protein localises to the cytoplasm. In terms of biological role, required for rescue of stalled ribosomes mediated by trans-translation. Binds to transfer-messenger RNA (tmRNA), required for stable association of tmRNA with ribosomes. tmRNA and SmpB together mimic tRNA shape, replacing the anticodon stem-loop with SmpB. tmRNA is encoded by the ssrA gene; the 2 termini fold to resemble tRNA(Ala) and it encodes a 'tag peptide', a short internal open reading frame. During trans-translation Ala-aminoacylated tmRNA acts like a tRNA, entering the A-site of stalled ribosomes, displacing the stalled mRNA. The ribosome then switches to translate the ORF on the tmRNA; the nascent peptide is terminated with the 'tag peptide' encoded by the tmRNA and targeted for degradation. The ribosome is freed to recommence translation, which seems to be the essential function of trans-translation. This is SsrA-binding protein from Flavobacterium johnsoniae (strain ATCC 17061 / DSM 2064 / JCM 8514 / BCRC 14874 / CCUG 350202 / NBRC 14942 / NCIMB 11054 / UW101) (Cytophaga johnsonae).